A 100-amino-acid chain; its full sequence is Urease subunit gamma (100 aa).

It belongs to the urease gamma subunit family. Heterotrimer of UreA (gamma), UreB (beta) and UreC (alpha) subunits. Three heterotrimers associate to form the active enzyme.

The protein localises to the cytoplasm. It catalyses the reaction urea + 2 H2O + H(+) = hydrogencarbonate + 2 NH4(+). Its pathway is nitrogen metabolism; urea degradation; CO(2) and NH(3) from urea (urease route): step 1/1. This chain is Urease subunit gamma, found in Pseudomonas putida (strain ATCC 700007 / DSM 6899 / JCM 31910 / BCRC 17059 / LMG 24140 / F1).